The sequence spans 785 residues: MDPRVAWIQPEQKGPANALWMQIWETSQGVGRGGSGFASYFCLNSPALDTAAAPGAAGRAAPAAGGPGPAPAASSPPPAPGPAALPPALLTALGPAADSARRLHKSPSLSSSSSSSSSNAESGTESPGCSSSSSSSTSLGRAGSGRTFFSFADGAAHAHPGPRGSTPAGSPPQHQFHPGRRKRENKASTYGLNYLLSGSRAATLSGGGGPGAQAARPGTPWKSRAYSPGIQGLHEEIIDFYNFMSPCPEEAAMRREVVKRIETVVKDLWPTADVQIFGSFSTGLYLPTSDIDLVVFGKWERPPLQLLEQALRKHNVAEPCSIKVLDKATVPIIKLTDQETEVKVDISFNMETGVRAAEFIKNYMKKYSLLPYLILVLKQFLLQRDLNEVFTGGISSYSLILMAISFLQLHPRIDARRADENLGMLLVEFFELYGRNFNYLKTGIRIKEGGAYIAKEEIMKAMTSGYRPSMLCIEDPLLPGNDVGRSSYGAMQVKQVFDYAYIVLSHAVSPLARSYPNRDSESTLGRIIKVTQEVIDYRRWIKEKWGSRILPSPDLDNRIKIKERITTCNGEQMQSREPSSPYTQRLTLSLSSPQLLSSGSSASSVSSLSGSDIDSDTPPCTTPSVYQFSLQAPTTLMASLPTALPMPSSKPQPAASRTLIMTTNNQTRVTIPPPTLGVAPVPCRQAGVDGTTSLKAVHSVTSPAIPSASPNPLSSPHLYHKQHNGMKLSMKGSHNHTQGGGYSSVGSGAVRPPVGNRGHHQYNRTGWRRKKHAHTRDSLPVSLSR.

Residues 56 to 184 (AAGRAAPAAG…QFHPGRRKRE (129 aa)) are disordered. Residues 68-85 (GPAPAASSPPPAPGPAAL) are compositionally biased toward pro residues. 2 stretches are compositionally biased toward low complexity: residues 86-98 (PPAL…PAAD) and 106-145 (SPSL…AGSG). Mg(2+) contacts are provided by aspartate 290 and aspartate 292. The ATP site is built by glycine 353, lysine 378, serine 396, and tyrosine 397. The region spanning 421 to 480 (NLGMLLVEFFELYGRNFNYLKTGIRIKEGGAYIAKEEIMKAMTSGYRPSMLCIEDPLLPG) is the PAP-associated domain. Asparagine 481 and arginine 485 together coordinate ATP. The span at 593–611 (PQLLSSGSSASSVSSLSGS) shows a compositional bias: low complexity. 2 disordered regions span residues 593–625 (PQLL…TPSV) and 731–785 (KGSH…SLSR). The segment covering 757–774 (RGHHQYNRTGWRRKKHAH) has biased composition (basic residues).

It belongs to the DNA polymerase type-B-like family. As to quaternary structure, component of a nuclear TRAMP-like complex, an ATP-dependent exosome regulatory complex consisting of a helicase (MTREX), an oligadenylate polymerase (TENT4B or TENT4A), and a substrate specific RNA-binding factor (ZCCHC7 or ZCCHC8). Several TRAMP-like complexes exist with specific compositions and are associated with nuclear, or nucleolar RNA exosomes. The cofactor is Mg(2+). Requires Mn(2+) as cofactor.

It is found in the cytoplasm. It localises to the nucleus. The protein localises to the nucleoplasm. The enzyme catalyses RNA(n) + ATP = RNA(n)-3'-adenine ribonucleotide + diphosphate. Its function is as follows. Terminal nucleotidyltransferase that catalyzes preferentially the transfer of ATP and GTP on RNA 3' poly(A) tail creating a heterogeneous 3' poly(A) tail leading to mRNAs stabilization by protecting mRNAs from active deadenylation. Also functions as a catalytic subunit of a TRAMP-like complex which has a poly(A) RNA polymerase activity and is involved in a post-transcriptional quality control mechanism. Polyadenylation with short oligo(A) tails is required for the degradative activity of the exosome on several of its nuclear RNA substrates. Has no terminal uridylyltransferase activity, and does not play a role in replication-dependent histone mRNA degradation via uridylation. In Mus musculus (Mouse), this protein is Terminal nucleotidyltransferase 4A.